The primary structure comprises 594 residues: MKFSDVVDALERLERTTSRTQIVAILTNLFKKVIEENKDIIDKVVYFIQGKLWPDWYGYPEIGIGEKGIIKAISLAANVKEKEVEGLYKQLGDLGLVAERLMAKAPKGGLMMFVKKKEELTFEKVYETLKRIAFMQGEGSRDLKIKTLAGLLKEASPKEAKYIVRFVQGKLRLGVGDASIIEALAHVAGTTKDVVERAYNLRADLGAVAKIAVTEGPEALKRVRPKPGVPVRPMLAERLNDPKEILKKLGGKGLAEYKYDGERAQIHLLPDGKVVIFSRRLENITRSYPDVVQYAKSGLKAKEAIVEGEIIAVNPETGEPRPFQELMRRRRKHDVALAMSEIPVNVKLFDIIYVDGEDMTNKPLPLRRKRLEEVVEESEEFSLSTAKLVSTPEELEQFFHQSISEGHEGLVVKAVHDKSVYQAGARGWLWIKYKKDYKSEMVEPVDLVVVGAFYGRGRRGGTFGALLVAGYDEKRDAFATVCKVGSGFSDEELARLPELLKPYISETKPPRVISNVKPDVWVRPALVAEIIGAEITLSPIHTCAKDEVSAGSGLAIRFPRFIRWRPDKGPEDATTCGEIVEMYKSRLKKVEEPT.

ATP is bound at residue glutamate 256. The N6-AMP-lysine intermediate role is filled by lysine 258. Positions 263, 279, 309, 349, 426, and 432 each coordinate ATP.

This sequence belongs to the ATP-dependent DNA ligase family. Mg(2+) is required as a cofactor.

It carries out the reaction ATP + (deoxyribonucleotide)n-3'-hydroxyl + 5'-phospho-(deoxyribonucleotide)m = (deoxyribonucleotide)n+m + AMP + diphosphate.. DNA ligase that seals nicks in double-stranded DNA during DNA replication, DNA recombination and DNA repair. The sequence is that of DNA ligase from Ignicoccus hospitalis (strain KIN4/I / DSM 18386 / JCM 14125).